The chain runs to 354 residues: Ornithine transcarbamylase, mitochondrial (354 aa).

Residues 1–32 constitute a mitochondrion transit peptide; it reads MLFHLRTLLNNAALRNGHNFVVRNFRCGQPLQ. Position 70 is an N6-acetyllysine; alternate (lysine 70). Lysine 70 bears the N6-succinyllysine; alternate mark. Residue lysine 80 is modified to N6-succinyllysine. The residue at position 88 (lysine 88) is an N6-acetyllysine; alternate. Lysine 88 bears the N6-succinyllysine; alternate mark. At serine 133 the chain carries Phosphoserine. Lysine 144, lysine 221, lysine 231, and lysine 238 each carry N6-acetyllysine; alternate. N6-succinyllysine; alternate occurs at positions 144, 221, 231, and 238. Lysine 243 bears the N6-acetyllysine mark. The active site involves aspartate 263. Lysine 274 and lysine 289 each carry N6-succinyllysine. An N6-acetyllysine; alternate modification is found at lysine 292. Lysine 292 carries the post-translational modification N6-succinyllysine; alternate. Residue cysteine 303 is part of the active site. Position 307 is an N6-acetyllysine; alternate (lysine 307). The residue at position 307 (lysine 307) is an N6-succinyllysine; alternate.

This sequence belongs to the aspartate/ornithine carbamoyltransferase superfamily. OTCase family. Homotrimer. In terms of processing, acetylation at Lys-88 negatively regulates ornithine carbamoyltransferase activity in response to nutrient signals.

Its subcellular location is the mitochondrion matrix. It catalyses the reaction carbamoyl phosphate + L-ornithine = L-citrulline + phosphate + H(+). The protein operates within nitrogen metabolism; urea cycle; L-citrulline from L-ornithine and carbamoyl phosphate: step 1/1. With respect to regulation, negatively regulated by lysine acetylation. Functionally, catalyzes the second step of the urea cycle, the condensation of carbamoyl phosphate with L-ornithine to form L-citrulline. The urea cycle ensures the detoxification of ammonia by converting it to urea for excretion. The sequence is that of Ornithine transcarbamylase, mitochondrial from Bos taurus (Bovine).